Here is a 377-residue protein sequence, read N- to C-terminus: Aquaporin-2 (377 aa).

At 1–14 (MAANKGINGGIKNH) the chain is on the cytoplasmic side. Residues 15 to 35 (FIAFLGEFVGTFLFLFFAYGG) form a helical membrane-spanning segment. Topologically, residues 36 to 56 (TQTANQTSQKNPSIVASPDIN) are extracellular. A glycan (N-linked (GlcNAc...) asparagine) is linked at Asn40. The helical transmembrane segment at 57 to 77 (QLLYIALIFGFSLTVNVWIFF) threads the bilayer. At 78-87 (RVSGGLFNPA) the chain is on the cytoplasmic side. The short motif at 85–87 (NPA) is the NPA 1 element. Residues 88-108 (VTIALCLVGVVGPVRSIFIFI) traverse the membrane as a helical segment. Residues 109–144 (AQVVASIAAAAAVRGLLPGDTVLFSCALAPGTSIAQ) are Extracellular-facing. The helical transmembrane segment at 145-165 (GLFLEMFFTIELVFTILMLAA) threads the bilayer. At 166-171 (EKTKVT) the chain is on the cytoplasmic side. A helical transmembrane segment spans residues 172 to 192 (FVAPVGIGLSLFVAELMGVAW). Topologically, residues 193 to 215 (TGGALNPARAFGAEVIGGFRGYH) are extracellular. The NPA 2 signature appears at 198–200 (NPA). A helical membrane pass occupies residues 216–236 (WIYWLGPLMGAVLAAGFYKVI). The Cytoplasmic segment spans residues 237–377 (KFLNYEQVNG…ANAQNRAKTP (141 aa)). Disordered regions lie at residues 278–332 (LFQT…RENE) and 358–377 (RLSG…AKTP). Polar residues-rich tracts occupy residues 315–328 (PAQQ…ASTI) and 368–377 (ANAQNRAKTP).

This sequence belongs to the MIP/aquaporin (TC 1.A.8) family.

It is found in the membrane. It carries out the reaction H2O(in) = H2O(out). The catalysed reaction is glycerol(in) = glycerol(out). In terms of biological role, water channel required to facilitate the transport of water across membranes. Involved in conidiation. This is Aquaporin-2 from Botryotinia fuckeliana (strain B05.10) (Noble rot fungus).